Consider the following 20-residue polypeptide: Astacin-like peptidase p18 (20 aa).

The region spanning asparagine 1–aspartate 20 is the Peptidase M12A domain.

Zn(2+) serves as cofactor.

Its function is as follows. Active against casein. Has a role as a digestive enzyme. This Argiope aurantia (Black-and-yellow garden spider) protein is Astacin-like peptidase p18.